A 488-amino-acid chain; its full sequence is Receptor-like tyrosine-protein kinase kin-15 (488 aa).

The first 26 residues, 1-26 (MCLKMRYERIKYILLFSLMHLVYSNS), serve as a signal peptide directing secretion. N25 is a glycosylation site (N-linked (GlcNAc...) asparagine). Residues 27-50 (TFESFTENPHISSQISNVLYMDQM) lie on the Extracellular side of the membrane. A helical membrane pass occupies residues 51–70 (FIIYILICILLILISVIVYL). Topologically, residues 71 to 488 (SKRYSQQMMQ…SKLEDWIRRD (418 aa)) are cytoplasmic. One can recognise a Protein kinase domain in the interval 144–458 (EISEDKLGSG…VEFFEEHLSV (315 aa)). Residues 150 to 158 (LGSGFFGEV) and K183 each bind ATP. D319 serves as the catalytic Proton acceptor.

The protein belongs to the protein kinase superfamily. Tyr protein kinase family. Hypodermal cells.

It localises to the cell membrane. It catalyses the reaction L-tyrosyl-[protein] + ATP = O-phospho-L-tyrosyl-[protein] + ADP + H(+). May be specifically involved in cell-cell interactions regulating cell fusions that generate the hypodermis during postembryonic development. It has a role in the development of the HYP7 hypodermal syncytium. In Caenorhabditis elegans, this protein is Receptor-like tyrosine-protein kinase kin-15 (kin-15).